The sequence spans 306 residues: Oligopeptide transport system permease protein OppB (306 aa).

Topologically, residues Met-1 to Glu-11 are cytoplasmic. A helical transmembrane segment spans residues Ala-12–Gly-32. Residues Ser-33–Lys-99 are Periplasmic-facing. One can recognise an ABC transmembrane type-1 domain in the interval Phe-94–Val-293. The chain crosses the membrane as a helical span at residues Leu-100–Ala-120. At Leu-121–Thr-137 the chain is on the cytoplasmic side. The helical transmembrane segment at Gly-138–Leu-158 threads the bilayer. Over His-159–Gly-169 the chain is Periplasmic. Residues Ala-170–Ala-190 form a helical membrane-spanning segment. The Cytoplasmic segment spans residues Arg-191–Leu-229. A helical membrane pass occupies residues Leu-230–Ile-250. Over Glu-251–Thr-279 the chain is Periplasmic. A helical transmembrane segment spans residues Ile-280–Ile-300. Over Asp-301–Tyr-306 the chain is Cytoplasmic.

The protein belongs to the binding-protein-dependent transport system permease family. OppBC subfamily. As to quaternary structure, the complex is composed of two ATP-binding proteins (OppD and OppF), two transmembrane proteins (OppB and OppC) and a solute-binding protein (OppA).

Its subcellular location is the cell inner membrane. In terms of biological role, part of the ABC transporter complex OppABCDF involved in the uptake of oligopeptides. Probably responsible for the translocation of the substrate across the membrane. This Shigella flexneri protein is Oligopeptide transport system permease protein OppB (oppB).